Reading from the N-terminus, the 344-residue chain is C-C chemokine receptor-like 2 (344 aa).

At 1–43 (MANYTLAPEDEYDVLIEGELESDEAEQCDKYDAQALSAQLVPS) the chain is on the extracellular side. Asn-3 carries an N-linked (GlcNAc...) asparagine glycan. Residues 44 to 64 (LCSAVFVIGVLDNLLVVLILV) form a helical membrane-spanning segment. The Cytoplasmic segment spans residues 65-74 (KYKGLKRVEN). A helical membrane pass occupies residues 75 to 95 (IYLLNLAVSNLCFLLTLPFWA). The Extracellular portion of the chain corresponds to 96-104 (HAGGDPMCK). A disulfide bridge links Cys-103 with Cys-181. The chain crosses the membrane as a helical span at residues 105-125 (ILIGLYFVGLYSETFFNCLLT). Over 126–144 (VQRYLVFLHKGNFFSARRR) the chain is Cytoplasmic. A helical transmembrane segment spans residues 145–165 (VPCGIITSVLAWVTAILATLP). The Extracellular segment spans residues 166-198 (EFVVYKPQMEDQKYKCAFSRTPFLPADETFWKH). A helical membrane pass occupies residues 199-219 (FLTLKMNISVLVLPLFIFTFL). At 220 to 238 (YVQMRKTLRFREQRYSLFK) the chain is on the cytoplasmic side. Residues 239–259 (LVFAIMVVFLLMWAPYNIAFF) traverse the membrane as a helical segment. At 260 to 286 (LSTFKEHFSLSDCKSSYNLDKSVHITK) the chain is on the extracellular side. The chain crosses the membrane as a helical span at residues 287–307 (LIATTHCCINPLLYAFLDGTF). The Cytoplasmic segment spans residues 308–344 (SKYLCRCFHLRSNTPLQPRGQSAQGTSREEPDHSTEV). The segment covering 324 to 333 (QPRGQSAQGT) has biased composition (polar residues). A disordered region spans residues 324–344 (QPRGQSAQGTSREEPDHSTEV). A compositionally biased stretch (basic and acidic residues) spans 334–344 (SREEPDHSTEV).

The protein belongs to the G-protein coupled receptor 1 family. In terms of tissue distribution, expressed abundantly in immunal tissues such as spleen, fetal liver, lymph node and bone marrow. Strong expression also in lung and heart. Expressed in almost all hematopoietic cells including monocytes, macrophages, PMNs, T-cells (both CD4+ and CD8+), monocyte-derived iDCs, NK cells, and CD34+ progenitor cells. B-cells expressed isoform 1 but not isoform 2. Up-regulated on synovial neutrophils of rheumatoid arthritis patients.

The protein resides in the cell membrane. Functionally, receptor for CCL19 and chemerin/RARRES2. Does not appear to be a signaling receptor, but may have a role in modulating chemokine-triggered immune responses by capturing and internalizing CCL19 or by presenting RARRES2 ligand to CMKLR1, a functional signaling receptors. Plays a critical role for the development of Th2 responses. The chain is C-C chemokine receptor-like 2 (CCRL2) from Homo sapiens (Human).